A 268-amino-acid polypeptide reads, in one-letter code: Glucosamine-6-phosphate deaminase (268 aa).

D72 (proton acceptor; for enolization step) is an active-site residue. D141 (for ring-opening step) is an active-site residue. Residue H143 is the Proton acceptor; for ring-opening step of the active site. Catalysis depends on E148, which acts as the For ring-opening step.

This sequence belongs to the glucosamine/galactosamine-6-phosphate isomerase family. NagB subfamily.

It catalyses the reaction alpha-D-glucosamine 6-phosphate + H2O = beta-D-fructose 6-phosphate + NH4(+). Its pathway is amino-sugar metabolism; N-acetylneuraminate degradation; D-fructose 6-phosphate from N-acetylneuraminate: step 5/5. With respect to regulation, allosterically activated by N-acetylglucosamine 6-phosphate (GlcNAc6P). Functionally, catalyzes the reversible isomerization-deamination of glucosamine 6-phosphate (GlcN6P) to form fructose 6-phosphate (Fru6P) and ammonium ion. This Borreliella afzelii (strain PKo) (Borrelia afzelii) protein is Glucosamine-6-phosphate deaminase.